The following is a 270-amino-acid chain: Centromere protein Q (270 aa).

The tract at residues 1-59 (MSGKANTSKKKSQRVKRNVKQRADKEDEELDSPENKVGNRAKRNRSHAGHLSSKEQTKC) is disordered. Basic residues-rich tracts occupy residues 7-20 (TSKK…RNVK) and 39-48 (NRAKRNRSHA). Serine 52 carries the phosphoserine modification. The stretch at 143–205 (LKVEREQERA…EEEMKEVFHI (63 aa)) forms a coiled coil.

It belongs to the CENP-Q/OKP1 family. Component of the CENPA-CAD complex, composed of CENPI, CENPK, CENPL, CENPO, CENPP, CENPQ, CENPR and CENPS. The CENPA-CAD complex interacts with the CENPA-NAC complex, at least composed of CENPA, CENPC, CENPH, CENPM, CENPN, CENPT and CENPU. In terms of processing, phosphorylation at Ser-52 is essential for CENPE recruitment to kinetochores and orderly chromosome congression.

It localises to the nucleus. Its subcellular location is the chromosome. The protein resides in the centromere. Component of the CENPA-CAD (nucleosome distal) complex, a complex recruited to centromeres which is involved in assembly of kinetochore proteins, mitotic progression and chromosome segregation. May be involved in incorporation of newly synthesized CENPA into centromeres via its interaction with the CENPA-NAC complex. Plays an important role in chromosome congression and in the recruitment of CENP-O complex (which comprises CENPO, CENPP, CENPQ and CENPU), CENPE and PLK1 to the kinetochores. In Rattus norvegicus (Rat), this protein is Centromere protein Q (Cenpq).